A 219-amino-acid polypeptide reads, in one-letter code: Inner membrane protein YccA (219 aa).

At 1 to 22 (MDRIVSSSHDRTSLLSTHKVLR) the chain is on the periplasmic side. 2 consecutive transmembrane segments (helical) span residues 23 to 43 (NTYF…TAST) and 44 to 64 (VLML…GLMF). Residues 65-73 (LTYKTANKP) are Periplasmic-facing. A helical transmembrane segment spans residues 74-94 (TGIISAFAFTGFLGYILGPIL). At 95–104 (NTYLSAGMGD) the chain is on the cytoplasmic side. Residues 105-125 (VIAMALGGTALVFFCCSAYVL) traverse the membrane as a helical segment. Residues 126-133 (TTRKDMSF) are Periplasmic-facing. A helical transmembrane segment spans residues 134 to 154 (LGGMLMAGIVVVLIGMVANIF). The Cytoplasmic segment spans residues 155 to 157 (LQL). The helical transmembrane segment at 158 to 178 (PALHLAISAVFILISSGAILF) threads the bilayer. The Periplasmic portion of the chain corresponds to 179–195 (ETSNIIHGGETNYIRAT). A helical membrane pass occupies residues 196 to 216 (VSLYVSLYNIFVSLLSILGFA). Residues 217–219 (SRD) are Cytoplasmic-facing.

Belongs to the BI1 family.

The protein resides in the cell inner membrane. The sequence is that of Inner membrane protein YccA (yccA) from Escherichia coli O6:H1 (strain CFT073 / ATCC 700928 / UPEC).